We begin with the raw amino-acid sequence, 453 residues long: Tol-Pal system protein TolB (453 aa).

Positions Met-1–Ala-31 are cleaved as a signal peptide.

The protein belongs to the TolB family. The Tol-Pal system is composed of five core proteins: the inner membrane proteins TolA, TolQ and TolR, the periplasmic protein TolB and the outer membrane protein Pal. They form a network linking the inner and outer membranes and the peptidoglycan layer.

The protein localises to the periplasm. Part of the Tol-Pal system, which plays a role in outer membrane invagination during cell division and is important for maintaining outer membrane integrity. This chain is Tol-Pal system protein TolB, found in Orientia tsutsugamushi (strain Boryong) (Rickettsia tsutsugamushi).